A 360-amino-acid polypeptide reads, in one-letter code: Chorismate synthase (360 aa).

An NADP(+)-binding site is contributed by R47. FMN-binding positions include R124–S126, G286, K301–T305, and R327.

This sequence belongs to the chorismate synthase family. Homotetramer. It depends on FMNH2 as a cofactor.

It carries out the reaction 5-O-(1-carboxyvinyl)-3-phosphoshikimate = chorismate + phosphate. Its pathway is metabolic intermediate biosynthesis; chorismate biosynthesis; chorismate from D-erythrose 4-phosphate and phosphoenolpyruvate: step 7/7. In terms of biological role, catalyzes the anti-1,4-elimination of the C-3 phosphate and the C-6 proR hydrogen from 5-enolpyruvylshikimate-3-phosphate (EPSP) to yield chorismate, which is the branch point compound that serves as the starting substrate for the three terminal pathways of aromatic amino acid biosynthesis. This reaction introduces a second double bond into the aromatic ring system. The protein is Chorismate synthase of Synechococcus sp. (strain RCC307).